The primary structure comprises 362 residues: Patr class I histocompatibility antigen, B-2 alpha chain (362 aa).

The signal sequence occupies residues 1–24 (MQVTAPRTVLLLLSAALALTETWA). The alpha-1 stretch occupies residues 25-114 (GSHSMKYFYT…LRGYYNQSEA (90 aa)). Over 25 to 308 (GSHSMKYFYT…EPSSQSTIPI (284 aa)) the chain is Extracellular. A glycan (N-linked (GlcNAc...) asparagine) is linked at N110. An alpha-2 region spans residues 115–206 (GSHIIQRMYG…ENGKETLQRA (92 aa)). 2 cysteine pairs are disulfide-bonded: C125–C188 and C227–C283. Residues 207-298 (DPPKTHVTHH…GLPKPLTLRW (92 aa)) are alpha-3. The Ig-like C1-type domain occupies 209–295 (PKTHVTHHPI…QHEGLPKPLT (87 aa)). The segment at 299-308 (EPSSQSTIPI) is connecting peptide. A helical membrane pass occupies residues 309-332 (VGIVAGLAVLAVVVIGAVVAAVMC). Topologically, residues 333-362 (RRKSSGGKGGSYSQAASSDSAQGSDVSLTA) are cytoplasmic. The disordered stretch occupies residues 336–362 (SSGGKGGSYSQAASSDSAQGSDVSLTA). Low complexity predominate over residues 343 to 362 (SYSQAASSDSAQGSDVSLTA).

Belongs to the MHC class I family. In terms of assembly, heterodimer of an alpha chain and a beta chain (beta-2-microglobulin).

The protein localises to the membrane. Its function is as follows. Involved in the presentation of foreign antigens to the immune system. This Pan troglodytes (Chimpanzee) protein is Patr class I histocompatibility antigen, B-2 alpha chain.